We begin with the raw amino-acid sequence, 341 residues long: Dihydroorotate dehydrogenase (quinone) (341 aa).

FMN contacts are provided by residues 61-65 (AGLDK) and threonine 85. Lysine 65 is a substrate binding site. A substrate-binding site is contributed by 110 to 114 (NRMGF). Residues asparagine 138 and asparagine 171 each coordinate FMN. Residue asparagine 171 participates in substrate binding. The active-site Nucleophile is the serine 174. Asparagine 176 contributes to the substrate binding site. 2 residues coordinate FMN: lysine 216 and threonine 244. 245–246 (NT) contributes to the substrate binding site. FMN contacts are provided by residues glycine 267, glycine 296, and 317–318 (YS).

It belongs to the dihydroorotate dehydrogenase family. Type 2 subfamily. Monomer. It depends on FMN as a cofactor.

It localises to the cell membrane. The enzyme catalyses (S)-dihydroorotate + a quinone = orotate + a quinol. Its pathway is pyrimidine metabolism; UMP biosynthesis via de novo pathway; orotate from (S)-dihydroorotate (quinone route): step 1/1. In terms of biological role, catalyzes the conversion of dihydroorotate to orotate with quinone as electron acceptor. The polypeptide is Dihydroorotate dehydrogenase (quinone) (Pseudomonas fluorescens (strain SBW25)).